Here is a 497-residue protein sequence, read N- to C-terminus: MFTVKPWSSAEVVHEALAIGLFEGKDSWSGLAGEYDSRLGGQLSNLRKEGDISAKRGRIATIHTMLPTGVKRLYFVGLGKKEELTFERLREVFGKLFRTWKQAKRTEAAIALDTFTTETVDSNEAAHALAEAYYLATYEFPGYKQKKSEPDYALESLTVYTAADAAEIEASLFVGSVYGKATNSARTLVNTPGNLLTASDLADYAVELAKRYDFDYEILEKEEMERLGMGALLAVNQGSKQPPKLIVLKYQGKEQWENVIGLVGKGVTFDTGGYCLKPRDSMIDMKTDMGGAAAVLGAMEAIGELRPEQNVLAVIPATDNMISAEAFKPDDVITSLSGKTIEVRNTDAEGRLILADAITYAKQHGARYLIDVATLTGGVIVALGTDKTGAMTNNEALFEQLLEASMETGEFIWRLPITEKDRERVRSSKIADLNNSPGREGHAIMGGAFIGEFAEDTPWVHLDIAGTATTKKDGDLGPAGATGVMVRTLTAFVERFE.

Mn(2+) contacts are provided by K265 and D270. K277 is an active-site residue. D288, D347, and E349 together coordinate Mn(2+). Residue R351 is part of the active site.

Belongs to the peptidase M17 family. The cofactor is Mn(2+).

The protein localises to the cytoplasm. The enzyme catalyses Release of an N-terminal amino acid, Xaa-|-Yaa-, in which Xaa is preferably Leu, but may be other amino acids including Pro although not Arg or Lys, and Yaa may be Pro. Amino acid amides and methyl esters are also readily hydrolyzed, but rates on arylamides are exceedingly low.. It catalyses the reaction Release of an N-terminal amino acid, preferentially leucine, but not glutamic or aspartic acids.. Functionally, presumably involved in the processing and regular turnover of intracellular proteins. Catalyzes the removal of unsubstituted N-terminal amino acids from various peptides. The sequence is that of Probable cytosol aminopeptidase from Geobacillus thermodenitrificans (strain NG80-2).